Consider the following 117-residue polypeptide: MENVNFTPKEILQKQFRQKMRGYDPDDVDSFLDNVIKDYDAFVKENQRLQDENERLLAKVDELTRQVQVGASQPRAAATSPASSNVTNMDILKRLSNLERHVFGSQLDNDPNESHRL.

Residues 32–70 are a coiled coil; it reads LDNVIKDYDAFVKENQRLQDENERLLAKVDELTRQVQVG.

Belongs to the GpsB family. As to quaternary structure, forms polymers through the coiled coil domains. Interacts with PBP1, MreC and EzrA.

The protein localises to the cytoplasm. In terms of biological role, divisome component that associates with the complex late in its assembly, after the Z-ring is formed, and is dependent on DivIC and PBP2B for its recruitment to the divisome. Together with EzrA, is a key component of the system that regulates PBP1 localization during cell cycle progression. Its main role could be the removal of PBP1 from the cell pole after pole maturation is completed. Also contributes to the recruitment of PBP1 to the division complex. Not essential for septum formation. In Levilactobacillus brevis (strain ATCC 367 / BCRC 12310 / CIP 105137 / JCM 1170 / LMG 11437 / NCIMB 947 / NCTC 947) (Lactobacillus brevis), this protein is Cell cycle protein GpsB.